Reading from the N-terminus, the 508-residue chain is RanBP-type and C3HC4-type zinc finger-containing protein 1 (508 aa).

Met-1 bears the N-acetylmethionine mark. Positions 1-218 (MDEKTKKAEE…PGCEMCCRAR (218 aa)) are interaction with IRF3. The interval 1–268 (MDEKTKKAEE…NYLQHVQLEQ (268 aa)) is interaction with TAB2. Position 50 is a phosphoserine (Ser-50). Positions 55 to 119 (IRLCVSVEDA…DQETLHSHGI (65 aa)) constitute a Ubiquitin-like domain. Residues 69–131 (VTIWLTVRPD…NGDGAYLYLL (63 aa)) are interaction with RNF31. The tract at residues 163-191 (QSRGPLEPVLPKPRTNQEPGQPDAAPESP) is disordered. The segment at 188–220 (PESPPVGWQCPGCTFINKPTRPGCEMCCRARPE) adopts a RanBP2-type zinc-finger fold. Positions 231–259 (DEEERARLAGEEEALRQYQQRKQQQQEGN) form a coiled coil. The interval 276–504 (EPTECPVCYS…VNGIPCHPSC (229 aa)) is TRIAD supradomain. 7 residues coordinate Zn(2+): Cys-280, Cys-283, Cys-298, His-300, Cys-303, Cys-306, and Cys-321. An RING-type 1 zinc finger spans residues 280 to 330 (CPVCYSVLAPGEAVVLRECLHTFCRECLQGTIRNSQEAEVACPFIDSTYSC). Phosphotyrosine is present on Tyr-328. Residues Cys-330, Cys-369, Cys-374, Cys-389, Cys-392, Cys-397, Cys-400, His-404, Cys-409, Cys-445, and Cys-448 each contribute to the Zn(2+) site. The IBR-type zinc finger occupies 349–409 (QRFLDLGVSI…CKAIHEHMNC (61 aa)). The RING-type 2; atypical zinc finger occupies 445–474 (CPQCRIVVQKKDGCDWIRCTVCHTEICWVT). Residue Cys-458 is part of the active site. The Zn(2+) site is built by Cys-463 and Cys-466.

It belongs to the RBR family. Component of the LUBAC complex (linear ubiquitin chain assembly complex) which consists of SHARPIN, RBCK1 and RNF31. LUBAC has a MW of approximately 600 kDa suggesting a heteromultimeric assembly of its subunits. Interacts with beta-I-type (PRKCB1) and zeta-type protein kinase C (PRKCZ). Interacts with UBE2L3. Interacts with IREB2 only in iron-rich conditions. Associates with the TNF-R1 signaling complex (TNF-RSC) in a stimulation-dependent manner. Interacts with EYA1, TAB2, TAB3, MAP3K7 TRAF6 and RIPK1. Interacts with IRF3. Post-translationally, auto-ubiquitinated. Auto-ubiquitination leads to degradation by the proteasome. Phosphorylated. In vitro, phosphorylation inhibits auto-ubiquitination activity.

It catalyses the reaction [E2 ubiquitin-conjugating enzyme]-S-ubiquitinyl-L-cysteine + [acceptor protein]-L-lysine = [E2 ubiquitin-conjugating enzyme]-L-cysteine + [acceptor protein]-N(6)-ubiquitinyl-L-lysine.. The protein operates within protein modification; protein ubiquitination. E3 ubiquitin-protein ligase, which accepts ubiquitin from specific E2 ubiquitin-conjugating enzymes, such as UBE2L3/UBCM4, and then transfers it to substrates. Functions as an E3 ligase for oxidized IREB2 and both heme and oxygen are necessary for IREB2 ubiquitination. Promotes ubiquitination of TAB2 and IRF3 and their degradation by the proteasome. Component of the LUBAC complex which conjugates linear ('Met-1'-linked) polyubiquitin chains to substrates and plays a key role in NF-kappa-B activation and regulation of inflammation. LUBAC conjugates linear polyubiquitin to IKBKG and RIPK1 and is involved in activation of the canonical NF-kappa-B and the JNK signaling pathways. Linear ubiquitination mediated by the LUBAC complex interferes with TNF-induced cell death and thereby prevents inflammation. LUBAC is recruited to the TNF-R1 signaling complex (TNF-RSC) following polyubiquitination of TNF-RSC components by BIRC2 and/or BIRC3 and to conjugate linear polyubiquitin to IKBKG and possibly other components contributing to the stability of the complex. The LUBAC complex is also involved in innate immunity by conjugating linear polyubiquitin chains at the surface of bacteria invading the cytosol to form the ubiquitin coat surrounding bacteria. LUBAC is not able to initiate formation of the bacterial ubiquitin coat, and can only promote formation of linear polyubiquitins on pre-existing ubiquitin. The bacterial ubiquitin coat acts as an 'eat-me' signal for xenophagy and promotes NF-kappa-B activation. Together with OTULIN, the LUBAC complex regulates the canonical Wnt signaling during angiogenesis. Binds polyubiquitin of different linkage types. The protein is RanBP-type and C3HC4-type zinc finger-containing protein 1 (Rbck1) of Mus musculus (Mouse).